The sequence spans 283 residues: Bifunctional protein FolD (283 aa).

NADP(+) contacts are provided by residues 165–167 (GRS), S190, and V231.

It belongs to the tetrahydrofolate dehydrogenase/cyclohydrolase family. As to quaternary structure, homodimer.

The enzyme catalyses (6R)-5,10-methylene-5,6,7,8-tetrahydrofolate + NADP(+) = (6R)-5,10-methenyltetrahydrofolate + NADPH. It catalyses the reaction (6R)-5,10-methenyltetrahydrofolate + H2O = (6R)-10-formyltetrahydrofolate + H(+). The protein operates within one-carbon metabolism; tetrahydrofolate interconversion. In terms of biological role, catalyzes the oxidation of 5,10-methylenetetrahydrofolate to 5,10-methenyltetrahydrofolate and then the hydrolysis of 5,10-methenyltetrahydrofolate to 10-formyltetrahydrofolate. This chain is Bifunctional protein FolD, found in Anoxybacillus flavithermus (strain DSM 21510 / WK1).